A 294-amino-acid chain; its full sequence is Phosphatidylserine decarboxylase proenzyme (294 aa).

Catalysis depends on charge relay system; for autoendoproteolytic cleavage activity residues aspartate 100, histidine 157, and serine 261. Serine 261 functions as the Schiff-base intermediate with substrate; via pyruvic acid; for decarboxylase activity in the catalytic mechanism. At serine 261 the chain carries Pyruvic acid (Ser); by autocatalysis.

The protein belongs to the phosphatidylserine decarboxylase family. PSD-B subfamily. Prokaryotic type I sub-subfamily. Heterodimer of a large membrane-associated beta subunit and a small pyruvoyl-containing alpha subunit. It depends on pyruvate as a cofactor. Is synthesized initially as an inactive proenzyme. Formation of the active enzyme involves a self-maturation process in which the active site pyruvoyl group is generated from an internal serine residue via an autocatalytic post-translational modification. Two non-identical subunits are generated from the proenzyme in this reaction, and the pyruvate is formed at the N-terminus of the alpha chain, which is derived from the carboxyl end of the proenzyme. The autoendoproteolytic cleavage occurs by a canonical serine protease mechanism, in which the side chain hydroxyl group of the serine supplies its oxygen atom to form the C-terminus of the beta chain, while the remainder of the serine residue undergoes an oxidative deamination to produce ammonia and the pyruvoyl prosthetic group on the alpha chain. During this reaction, the Ser that is part of the protease active site of the proenzyme becomes the pyruvoyl prosthetic group, which constitutes an essential element of the active site of the mature decarboxylase.

Its subcellular location is the cell membrane. The enzyme catalyses a 1,2-diacyl-sn-glycero-3-phospho-L-serine + H(+) = a 1,2-diacyl-sn-glycero-3-phosphoethanolamine + CO2. Its pathway is phospholipid metabolism; phosphatidylethanolamine biosynthesis; phosphatidylethanolamine from CDP-diacylglycerol: step 2/2. Functionally, catalyzes the formation of phosphatidylethanolamine (PtdEtn) from phosphatidylserine (PtdSer). This Histophilus somni (strain 129Pt) (Haemophilus somnus) protein is Phosphatidylserine decarboxylase proenzyme.